A 510-amino-acid polypeptide reads, in one-letter code: Cytochrome P450 703A2 (510 aa).

Residues Ile2–Leu22 traverse the membrane as a helical segment. Cys451 provides a ligand contact to heme.

Belongs to the cytochrome P450 family. It depends on heme as a cofactor.

It localises to the membrane. The enzyme catalyses dodecanoate + reduced [NADPH--hemoprotein reductase] + O2 = 7-hydroxydodecanoate + oxidized [NADPH--hemoprotein reductase] + H2O + H(+). Its function is as follows. Involved in pollen wall development. Catalyzes the conversion of medium-chain saturated fatty acids to the corresponding monohydroxylated fatty acids, with a preferential hydroxylation of lauric acid at the C-7 position. In-chain hydroxylated fatty acids, together with omega-hydroxylated fatty acids, are key monomeric aliphatic building blocks for sporopollenin synthesis during exine formation. In Arabidopsis thaliana (Mouse-ear cress), this protein is Cytochrome P450 703A2.